We begin with the raw amino-acid sequence, 484 residues long: Acetyl-coenzyme A carboxylase carboxyl transferase subunit beta, chloroplastic (484 aa).

The CoA carboxyltransferase N-terminal domain maps to 223-484; it reads LWIQCDNCYG…LHAFFPLNKN (262 aa). Zn(2+) contacts are provided by C227, C230, C243, and C246. The C4-type zinc-finger motif lies at 227–246; the sequence is CDNCYGLMYKKVKMNVCEQC.

This sequence belongs to the AccD/PCCB family. Acetyl-CoA carboxylase is a heterohexamer composed of biotin carboxyl carrier protein, biotin carboxylase and 2 subunits each of ACCase subunit alpha and ACCase plastid-coded subunit beta (accD). The cofactor is Zn(2+).

It is found in the plastid. The protein resides in the chloroplast stroma. The enzyme catalyses N(6)-carboxybiotinyl-L-lysyl-[protein] + acetyl-CoA = N(6)-biotinyl-L-lysyl-[protein] + malonyl-CoA. It functions in the pathway lipid metabolism; malonyl-CoA biosynthesis; malonyl-CoA from acetyl-CoA: step 1/1. Component of the acetyl coenzyme A carboxylase (ACC) complex. Biotin carboxylase (BC) catalyzes the carboxylation of biotin on its carrier protein (BCCP) and then the CO(2) group is transferred by the transcarboxylase to acetyl-CoA to form malonyl-CoA. The chain is Acetyl-coenzyme A carboxylase carboxyl transferase subunit beta, chloroplastic from Olimarabidopsis pumila (Dwarf rocket).